The following is a 437-amino-acid chain: 3-phosphoshikimate 1-carboxyvinyltransferase (437 aa).

Residues K24, S25, and R29 each contribute to the 3-phosphoshikimate site. Phosphoenolpyruvate is bound at residue K24. Positions 95 and 123 each coordinate phosphoenolpyruvate. 3-phosphoshikimate contacts are provided by S168, Q170, D317, and K344. A phosphoenolpyruvate-binding site is contributed by Q170. D317 acts as the Proton acceptor in catalysis. 2 residues coordinate phosphoenolpyruvate: R348 and R390.

Belongs to the EPSP synthase family. Monomer.

The protein localises to the cytoplasm. The catalysed reaction is 3-phosphoshikimate + phosphoenolpyruvate = 5-O-(1-carboxyvinyl)-3-phosphoshikimate + phosphate. The protein operates within metabolic intermediate biosynthesis; chorismate biosynthesis; chorismate from D-erythrose 4-phosphate and phosphoenolpyruvate: step 6/7. Functionally, catalyzes the transfer of the enolpyruvyl moiety of phosphoenolpyruvate (PEP) to the 5-hydroxyl of shikimate-3-phosphate (S3P) to produce enolpyruvyl shikimate-3-phosphate and inorganic phosphate. This Wolinella succinogenes (strain ATCC 29543 / DSM 1740 / CCUG 13145 / JCM 31913 / LMG 7466 / NCTC 11488 / FDC 602W) (Vibrio succinogenes) protein is 3-phosphoshikimate 1-carboxyvinyltransferase.